A 254-amino-acid chain; its full sequence is Imidazole glycerol phosphate synthase subunit HisF (254 aa).

Catalysis depends on residues Asp13 and Asp132.

This sequence belongs to the HisA/HisF family. Heterodimer of HisH and HisF.

The protein resides in the cytoplasm. The catalysed reaction is 5-[(5-phospho-1-deoxy-D-ribulos-1-ylimino)methylamino]-1-(5-phospho-beta-D-ribosyl)imidazole-4-carboxamide + L-glutamine = D-erythro-1-(imidazol-4-yl)glycerol 3-phosphate + 5-amino-1-(5-phospho-beta-D-ribosyl)imidazole-4-carboxamide + L-glutamate + H(+). The protein operates within amino-acid biosynthesis; L-histidine biosynthesis; L-histidine from 5-phospho-alpha-D-ribose 1-diphosphate: step 5/9. Its function is as follows. IGPS catalyzes the conversion of PRFAR and glutamine to IGP, AICAR and glutamate. The HisF subunit catalyzes the cyclization activity that produces IGP and AICAR from PRFAR using the ammonia provided by the HisH subunit. The chain is Imidazole glycerol phosphate synthase subunit HisF from Nautilia profundicola (strain ATCC BAA-1463 / DSM 18972 / AmH).